The following is a 486-amino-acid chain: Glycogen synthase 2 (486 aa).

Lys-15 serves as a coordination point for ADP-alpha-D-glucose.

The protein belongs to the glycosyltransferase 1 family. Bacterial/plant glycogen synthase subfamily.

It catalyses the reaction [(1-&gt;4)-alpha-D-glucosyl](n) + ADP-alpha-D-glucose = [(1-&gt;4)-alpha-D-glucosyl](n+1) + ADP + H(+). The protein operates within glycan biosynthesis; glycogen biosynthesis. In terms of biological role, synthesizes alpha-1,4-glucan chains using ADP-glucose. The protein is Glycogen synthase 2 (glgA2) of Rhizobium meliloti (strain 1021) (Ensifer meliloti).